The following is a 361-amino-acid chain: Protein-L-isoaspartate O-methyltransferase domain-containing protein 2 (361 aa).

Glycine 2 carries the N-myristoyl glycine lipid modification. Serine 64 is a catalytic residue. AdoMet binding motif stretches follow at residues 85-94, 160-164, and 181-191; these read LNLGSGTGYL, YDRVY, and LKVGGILVMPL. A BC-box region spans residues 240–250; that stretch reads VRSLQDLARIA. A compositionally biased stretch (polar residues) spans 303 to 312; it reads SNPSDDNSSG. The segment at 303–335 is disordered; the sequence is SNPSDDNSSGDLEEERREEEATTPPDAKPEPPV. The interval 345–348 is CUL-box; that stretch reads LPLP.

It belongs to the methyltransferase superfamily. L-isoaspartyl/D-aspartyl protein methyltransferase family.

It localises to the cytoplasm. May act as a substrate recognition component of an ECS (Elongin BC-CUL5-SOCS-box protein) E3 ubiquitin ligase complex which mediates the ubiquitination and subsequent proteasomal degradation of target proteins. May bind to the methyltransferase cofactor S-adenosylmethionine (AdoMet) via the N-terminal AdoMet binding motif, but probably does not display methyltransferase activity. This Bos taurus (Bovine) protein is Protein-L-isoaspartate O-methyltransferase domain-containing protein 2 (PCMTD2).